The primary structure comprises 161 residues: Cyclin-dependent protein kinase inhibitor SMR12 (161 aa).

The segment covering 84–93 (EEEEVVEEEN) has biased composition (acidic residues). The disordered stretch occupies residues 84-106 (EEEEVVEEENDGFKTPTRPENRI).

Probable cyclin-dependent protein kinase (CDK) inhibitor that functions as a repressor of mitosis in the endoreduplication cell cycle. This is Cyclin-dependent protein kinase inhibitor SMR12 from Arabidopsis thaliana (Mouse-ear cress).